A 199-amino-acid polypeptide reads, in one-letter code: Large ribosomal subunit protein bL25 (199 aa).

The protein belongs to the bacterial ribosomal protein bL25 family. CTC subfamily. Part of the 50S ribosomal subunit; part of the 5S rRNA/L5/L18/L25 subcomplex. Contacts the 5S rRNA. Binds to the 5S rRNA independently of L5 and L18.

This is one of the proteins that binds to the 5S RNA in the ribosome where it forms part of the central protuberance. The sequence is that of Large ribosomal subunit protein bL25 from Caldanaerobacter subterraneus subsp. tengcongensis (strain DSM 15242 / JCM 11007 / NBRC 100824 / MB4) (Thermoanaerobacter tengcongensis).